Reading from the N-terminus, the 296-residue chain is Glycine N-acyltransferase (296 aa).

K16, K127, and K141 each carry N6-acetyllysine; alternate. K16, K127, and K141 each carry N6-succinyllysine; alternate. K159 is modified (N6-acetyllysine). Position 169 is an N6-succinyllysine (K169). N6-acetyllysine; alternate is present on residues K183 and K256. Residues K183 and K256 each carry the N6-succinyllysine; alternate modification.

Belongs to the glycine N-acyltransferase family. Predominantly expressed in liver (at protein level) and kidney. Down-regulated in hepatocellular carcinoma and other liver cancers.

The protein resides in the mitochondrion. The catalysed reaction is an acyl-CoA + glycine = an N-acylglycine + CoA + H(+). The enzyme catalyses benzoyl-CoA + glycine = N-benzoylglycine + CoA + H(+). In terms of biological role, mitochondrial acyltransferase which transfers an acyl group to the N-terminus of glycine and glutamine, although much less efficiently. Can conjugate numerous substrates to form a variety of N-acylglycines, with a preference for benzoyl-CoA over phenylacetyl-CoA as acyl donors. Thereby detoxify xenobiotics, such as benzoic acid or salicylic acid, and endogenous organic acids, such as isovaleric acid. The protein is Glycine N-acyltransferase (GLYAT) of Homo sapiens (Human).